A 499-amino-acid chain; its full sequence is Lysine--tRNA ligase (499 aa).

Residues Glu-410 and Glu-417 each coordinate Mg(2+).

Belongs to the class-II aminoacyl-tRNA synthetase family. As to quaternary structure, homodimer. Mg(2+) is required as a cofactor.

It localises to the cytoplasm. The catalysed reaction is tRNA(Lys) + L-lysine + ATP = L-lysyl-tRNA(Lys) + AMP + diphosphate. The chain is Lysine--tRNA ligase (lysS) from Bacillus subtilis (strain 168).